Here is a 431-residue protein sequence, read N- to C-terminus: Trigger factor (431 aa).

The region spanning 160-245 (EDRVTIDFSG…LKKVEVMVLP (86 aa)) is the PPIase FKBP-type domain.

Belongs to the FKBP-type PPIase family. Tig subfamily.

It localises to the cytoplasm. It catalyses the reaction [protein]-peptidylproline (omega=180) = [protein]-peptidylproline (omega=0). Its function is as follows. Involved in protein export. Acts as a chaperone by maintaining the newly synthesized protein in an open conformation. Functions as a peptidyl-prolyl cis-trans isomerase. The chain is Trigger factor from Actinobacillus succinogenes (strain ATCC 55618 / DSM 22257 / CCUG 43843 / 130Z).